Reading from the N-terminus, the 621-residue chain is DnaJ homolog subfamily C member 2 (621 aa).

M1 is subject to N-acetylmethionine. The segment at 23–31 (STLCQVEPV) is epitope (recognized by CD8(+) cytotoxic T-lymphocytes). 4 positions are modified to phosphoserine: S47, S49, S60, and S63. Positions 88–161 (DHYAVLGLGH…VKRRAFNSVD (74 aa)) constitute a J domain. Positions 160–250 (VDPTFDNSVP…RDERRWIEKQ (91 aa)) are ZRF1-UBD. 2 disordered regions span residues 294 to 315 (EKKA…QRQA) and 426 to 453 (KEEA…GSKN). 2 SANT domains span residues 449 to 511 (NGSK…KLDP) and 549 to 604 (TDFT…EMVK).

Component of ribosome-associated complex (RAC), a heterodimer composed of Hsp70/DnaK-type chaperone HSPA14 and Hsp40/DnaJ-type chaperone DNAJC2. Interacts (via ZRF1-UBD region) with ID1. Phosphorylated in M (mitotic) phase. Widely expressed.

The protein resides in the nucleus. It localises to the cytoplasm. It is found in the cytosol. Its function is as follows. Acts both as a chaperone in the cytosol and as a chromatin regulator in the nucleus. When cytosolic, acts as a molecular chaperone: component of the ribosome-associated complex (RAC), a complex involved in folding or maintaining nascent polypeptides in a folding-competent state. In the RAC complex, stimulates the ATPase activity of the ribosome-associated pool of Hsp70-type chaperones HSPA14 that bind to the nascent polypeptide chain. When nuclear, mediates the switching from polycomb-repressed genes to an active state: specifically recruited at histone H2A ubiquitinated at 'Lys-119' (H2AK119ub), and promotes the displacement of the polycomb PRC1 complex from chromatin, thereby facilitating transcription activation. This chain is DnaJ homolog subfamily C member 2 (DNAJC2), found in Homo sapiens (Human).